Reading from the N-terminus, the 44-residue chain is Large ribosomal subunit protein bL34 (44 aa).

Belongs to the bacterial ribosomal protein bL34 family.

The sequence is that of Large ribosomal subunit protein bL34 from Variovorax paradoxus (strain S110).